A 35-amino-acid polypeptide reads, in one-letter code: Cupiennin-2d (35 aa).

Gln-35 is modified (glutamine amide).

As to expression, expressed by the venom gland.

The protein resides in the secreted. This Cupiennius salei (American wandering spider) protein is Cupiennin-2d.